Reading from the N-terminus, the 353-residue chain is Very-long-chain 3-oxoacyl-CoA reductase (353 aa).

A helical transmembrane segment spans residues 33–53; sequence AAWALIAAGGFFVISRALLFG. Valine 78, aspartate 133, aspartate 141, asparagine 160, tyrosine 227, lysine 231, isoleucine 260, and serine 262 together coordinate NADP(+). Residue tyrosine 227 is the Proton donor of the active site. Catalysis depends on lysine 231, which acts as the Lowers pKa of active site Tyr.

The protein belongs to the short-chain dehydrogenases/reductases (SDR) family.

The protein localises to the endoplasmic reticulum membrane. The enzyme catalyses a very-long-chain (3R)-3-hydroxyacyl-CoA + NADP(+) = a very-long-chain 3-oxoacyl-CoA + NADPH + H(+). The protein operates within lipid metabolism; fatty acid biosynthesis. Its function is as follows. Component of the microsomal membrane bound fatty acid elongation system, which produces the 26-carbon very long-chain fatty acids (VLCFA) from palmitate. Catalyzes the reduction of the 3-ketoacyl-CoA intermediate that is formed in each cycle of fatty acid elongation. VLCFAs serve as precursors for ceramide and sphingolipids. The protein is Very-long-chain 3-oxoacyl-CoA reductase of Aspergillus terreus (strain NIH 2624 / FGSC A1156).